We begin with the raw amino-acid sequence, 92 residues long: Small ribosomal subunit protein uS19 (92 aa).

This sequence belongs to the universal ribosomal protein uS19 family.

In terms of biological role, protein S19 forms a complex with S13 that binds strongly to the 16S ribosomal RNA. The chain is Small ribosomal subunit protein uS19 from Methylorubrum extorquens (strain CM4 / NCIMB 13688) (Methylobacterium extorquens).